A 349-amino-acid chain; its full sequence is Putative F-box/LRR-repeat protein At3g16555 (349 aa).

Residues 1–48 form the F-box domain; the sequence is MVLLPWELEEDILSRLPPRSLVQFRSVCKRWNALFDVKSFNKDQFARA. Residues 267–290 form an LRR repeat; the sequence is VVWISLLTLPPNNLPNLFIVCYGI.

The polypeptide is Putative F-box/LRR-repeat protein At3g16555 (Arabidopsis thaliana (Mouse-ear cress)).